Reading from the N-terminus, the 295-residue chain is uncharacterized protein (295 aa).

The 58-residue stretch at 1-58 (MESGDLRVFQMVAREGTITKAALQLGYVQSNVTARIQQLEAELGTTLFLRHNRGMTLS) folds into the HTH lysR-type domain. The segment at residues 18–37 (ITKAALQLGYVQSNVTARIQ) is a DNA-binding region (H-T-H motif).

It belongs to the LysR transcriptional regulatory family.

This is an uncharacterized protein from Bacillus subtilis (strain 168).